Reading from the N-terminus, the 2193-residue chain is Highly reducing polyketide synthase VdtX (2193 aa).

The 417-residue stretch at 1-417 (MAICGIAVRL…GVNAHVIIES (417 aa)) folds into the Ketosynthase family 3 (KS3) domain. Active-site for beta-ketoacyl synthase activity residues include cysteine 170, histidine 306, and histidine 340. The segment at 513–809 (VFAGQGAQWP…HPYVPCLIRF (297 aa)) is malonyl-CoA:ACP transacylase (MAT) domain. The interval 877 to 1001 (HELLGTRVVD…GEVAQENLSR (125 aa)) is N-terminal hotdog fold. The segment at 877-1128 (HELLGTRVVD…DIVLRPLGAN (252 aa)) is dehydratase (DH) domain. One can recognise a PKS/mFAS DH domain in the interval 877–1202 (HELLGTRVVD…LQRQPKPSSE (326 aa)). Histidine 909 acts as the Proton acceptor; for dehydratase activity in catalysis. The tract at residues 1032 to 1202 (SVTSNTVSGR…LQRQPKPSSE (171 aa)) is C-terminal hotdog fold. The active-site Proton donor; for dehydratase activity is aspartate 1093. The methyltransferase (CMet) domain stretch occupies residues 1256 to 1390 (NYLNEPQQRI…DRWDSILKAA (135 aa)). An enoyl reductase (ER) domain region spans residues 1575 to 1783 (GQQVQLLGDD…SGQHIGQLRL (209 aa)). Positions 1807-1981 (ASYLLVGGLG…ASVIDIGEVQ (175 aa)) are ketoreductase (KR) domain. The Carrier domain maps to 2102–2183 (PSATQFVSLE…AMGEHVIREL (82 aa)). An O-(pantetheine 4'-phosphoryl)serine modification is found at serine 2143.

Its function is as follows. Highly reducing polyketide synthase; part of the gene cluster that mediates the biosynthesis of viriditoxin, one of the 'classical' secondary metabolites produced by fungi and that has antibacterial activity. The first step is performed by the polyketide synthase VdtA which condenses one acetyl-CoA and 6 malonyl-CoA units to form the heptaketide monomer backbone of viriditoxin. The product of VdtA is then O-methylated on C7 by the O-methyltransferase VdtC. The O-methyl group is important for the stereoselective coupling of the monomers at the final step of viriditoxin biosynthesis. The short-chain dehydrogenase/reductase VdtF is involved in the reduction of the C3-C4 double bond. The FAD-binding monooxygenase VdtE then converts the ketone group into a methyl-ester group to yield semi-viriditoxin. Finally, the laccase VdtB is involved in dimerization of 2 semi-viriditoxin molecules to yield the final viriditoxin. The non-catalytic carboxylesterase-like protein VdtD affects the stereochemistical outcome of the coupling. The highly reducing polyketide synthase VdtX is not involved in viriditoxin synthesis, but might possibly play a role in the production of additional metabolites not identified yet. The polypeptide is Highly reducing polyketide synthase VdtX (Byssochlamys spectabilis (Paecilomyces variotii)).